The sequence spans 257 residues: Protein orai-2 (257 aa).

Helical transmembrane passes span 67–84 (TSAL…EVQL), 95–115 (LIAF…ALLI), 149–169 (LAWG…VVLL), and 199–219 (AALV…VFTI).

The protein belongs to the Orai family.

The protein localises to the membrane. In terms of biological role, ca(2+) release-activated Ca(2+)-like (CRAC-like) channel subunit which mediates Ca(2+) influx and increase in Ca(2+)-selective current by synergy with the Ca(2+) sensor, STIM1. This is Protein orai-2 (ORAI2) from Gallus gallus (Chicken).